The primary structure comprises 192 residues: Casparian strip membrane protein 1 (192 aa).

The Cytoplasmic portion of the chain corresponds to 1–26 (MTKSVRLEEGDASKVLVPVGSNKGVS). Residues 27–47 (VMDLVLRLVGIAGTLGAAIAM) form a helical membrane-spanning segment. Residues 48–75 (GTNEQTLPFFTRFVVFNAEYDDFRSFRL) are Extracellular-facing. A helical transmembrane segment spans residues 76 to 96 (FVIVNAIVCAYFVLTLPLSIV). The Cytoplasmic segment spans residues 97–107 (HIMRSAARGSR). Residues 108-128 (ILLIIMDTVMLALLTAGASAA) form a helical membrane-spanning segment. The Extracellular portion of the chain corresponds to 129-161 (ASIVYLAHNGNTSTNWLPVCQQYGDFCQGASGS). An N-linked (GlcNAc...) asparagine glycan is attached at asparagine 139. The chain crosses the membrane as a helical span at residues 162 to 182 (LIGSFGAVVVFILIILLGAIA). Residues 183–192 (LSRHAKRVVL) are Cytoplasmic-facing.

The protein belongs to the Casparian strip membrane proteins (CASP) family. In terms of assembly, homodimer and heterodimers.

The protein localises to the cell membrane. Functionally, regulates membrane-cell wall junctions and localized cell wall deposition. Required for establishment of the Casparian strip membrane domain (CSD) and the subsequent formation of Casparian strips, a cell wall modification of the root endodermis that determines an apoplastic barrier between the intraorganismal apoplasm and the extraorganismal apoplasm and prevents lateral diffusion. The protein is Casparian strip membrane protein 1 of Lactuca saligna (Willowleaf lettuce).